Reading from the N-terminus, the 489-residue chain is MTFRNCVAVDLGASSGRVMLARYERECRSLTLREIHRFNNGLHSQNGYVTWDVDSLESAIRLGLNKVCEEGIRIDSIGIDTWGVDFVLLDQQGQRVGLPVAYRDSRTNGLMAQAQQQLGKRDIYQRSGIQFLPFNTLYQLRALTEQQPELIPHIAHALLMPDYFSYRLTGKMNWEYTNATTTQLVNINSDDWDESLLAWSGANKAWFGRPTHPGNVIGHWICPQGNEIPVVAVASHDTASAVIASPLNGSRAAYLSSGTWSLMGFESQTPFTNDTALAANITNEGGAEGRYRVLKNIMGLWLLQRVLQEQQINDLPALISATQALPACRFIINPNDDRFINPETMCSEIQAACRETAQPIPESDAELARCIFDSLALLYADVLHELAQLRGEDFSQLYIVGGGCQNTLLNQLCADACGIRVIAGPVEASTLGNIGIQLMTLDELNNVDDFRQVVSTTANLTTFTPNPDSEIAHYVARIHSTRQTKELCA.

13 to 17 contacts ATP; that stretch reads ASSGR. Cys-68 and Cys-222 are disulfide-bonded. Residues Gly-83 and 236 to 238 each bind substrate; that span reads HDT. Residue Asp-237 is the Proton acceptor of the active site. Thr-259 contacts ATP. Asn-296 lines the substrate pocket. ATP is bound at residue Gln-304. A disulfide bridge connects residues Cys-353 and Cys-370. Gly-402 contacts ATP. Cys-413 and Cys-417 are disulfide-bonded.

The protein belongs to the rhamnulokinase family. Monomer. Mg(2+) serves as cofactor.

The catalysed reaction is L-rhamnulose + ATP = L-rhamnulose 1-phosphate + ADP + H(+). It participates in carbohydrate degradation; L-rhamnose degradation; glycerone phosphate from L-rhamnose: step 2/3. In terms of biological role, involved in the catabolism of L-rhamnose (6-deoxy-L-mannose). Catalyzes the transfer of the gamma-phosphate group from ATP to the 1-hydroxyl group of L-rhamnulose to yield L-rhamnulose 1-phosphate. In Escherichia coli O9:H4 (strain HS), this protein is Rhamnulokinase.